Consider the following 383-residue polypeptide: S-adenosylmethionine synthase (383 aa).

His15 provides a ligand contact to ATP. Asp17 serves as a coordination point for Mg(2+). Glu43 is a binding site for K(+). The L-methionine site is built by Glu56 and Gln99. Residues 99–109 (QSPDINQGVDR) are flexible loop. Residues 164 to 166 (DAK), 230 to 231 (RF), Asp239, 245 to 246 (RK), Ala262, and Lys266 each bind ATP. Asp239 is a binding site for L-methionine. Lys270 contacts L-methionine.

The protein belongs to the AdoMet synthase family. As to quaternary structure, homotetramer; dimer of dimers. The cofactor is Mg(2+). K(+) serves as cofactor.

The protein resides in the cytoplasm. It carries out the reaction L-methionine + ATP + H2O = S-adenosyl-L-methionine + phosphate + diphosphate. Its pathway is amino-acid biosynthesis; S-adenosyl-L-methionine biosynthesis; S-adenosyl-L-methionine from L-methionine: step 1/1. Its function is as follows. Catalyzes the formation of S-adenosylmethionine (AdoMet) from methionine and ATP. The overall synthetic reaction is composed of two sequential steps, AdoMet formation and the subsequent tripolyphosphate hydrolysis which occurs prior to release of AdoMet from the enzyme. This Actinobacillus pleuropneumoniae serotype 7 (strain AP76) protein is S-adenosylmethionine synthase.